The primary structure comprises 117 residues: Large ribosomal subunit protein bL20c (117 aa).

It belongs to the bacterial ribosomal protein bL20 family.

The protein localises to the plastid. The protein resides in the chloroplast. Its function is as follows. Binds directly to 23S ribosomal RNA and is necessary for the in vitro assembly process of the 50S ribosomal subunit. It is not involved in the protein synthesizing functions of that subunit. The sequence is that of Large ribosomal subunit protein bL20c (rpl20) from Bigelowiella natans (Pedinomonas minutissima).